An 81-amino-acid polypeptide reads, in one-letter code: Defensin-like protein 43 (81 aa).

The signal sequence occupies residues 1–27 (MGITKTSVTFLFLLILAAFVSNYNVLA). 4 disulfides stabilise this stretch: Cys-40-Cys-79, Cys-44-Cys-67, Cys-53-Cys-77, and Cys-57-Cys-78.

Belongs to the DEFL family.

The protein localises to the secreted. This Arabidopsis thaliana (Mouse-ear cress) protein is Defensin-like protein 43.